A 248-amino-acid chain; its full sequence is MAPGAPSSSPSPILAALLFSSLVLSPAQAIVVYTDKEVYGAVGSRVTLHCSFWSSEWVSDDISFTWRYQPEGGRDAISIFHYAKGQPYIDEVGTFKERIQWVGDPQWKDGSIVIHNLDYSDNGTFTCDVKNPPDIVGKTSQVTLYVFEKVPTRYGVVLGAVIGGVLGVVLLVLLLFYVVRYCWLRRQAALQRRLSAMEKGKLHKPGKDTSKRGRQTPVLYAMLDHSRSTKAASEKKAKGLGESRKDKK.

Residues 1-29 (MAPGAPSSSPSPILAALLFSSLVLSPAQA) form the signal peptide. The region spanning 30-143 (IVVYTDKEVY…DIVGKTSQVT (114 aa)) is the Ig-like V-type domain. Topologically, residues 30 to 153 (IVVYTDKEVY…LYVFEKVPTR (124 aa)) are extracellular. A disulfide bridge links Cys50 with Cys127. An N-linked (GlcNAc...) (complex) asparagine glycan is attached at Asn122. The helical transmembrane segment at 154–179 (YGVVLGAVIGGVLGVVLLVLLLFYVV) threads the bilayer. At 180 to 248 (RYCWLRRQAA…GLGESRKDKK (69 aa)) the chain is on the cytoplasmic side. At Ser210 the chain carries Phosphoserine; by PKC. A disordered region spans residues 222–248 (MLDHSRSTKAASEKKAKGLGESRKDKK). Over residues 224–248 (DHSRSTKAASEKKAKGLGESRKDKK) the composition is skewed to basic and acidic residues. Phosphoserine occurs at positions 226 and 228. Phosphoserine; by PKC is present on residues Ser233 and Ser243.

This sequence belongs to the myelin P0 protein family. Homodimer and homotetramer. N-glycosylated; contains sulfate-substituted glycan.

Its subcellular location is the cell membrane. Its function is as follows. Is an adhesion molecule necessary for normal myelination in the peripheral nervous system. It mediates adhesion between adjacent myelin wraps and ultimately drives myelin compaction. The chain is Myelin protein P0 (MPZ) from Equus caballus (Horse).